A 367-amino-acid chain; its full sequence is Pentatricopeptide repeat-containing protein At1g11900 (367 aa).

8 PPR repeats span residues 69–103 (SKIDYTNLVEKFTRDGNLSGAYDLLQSLQEKNICL), 104–139 (PISVFKNLLAAAGELNDMKLSCRVFREVLILPGKEP), 141–175 (SSDCYLNLARAFINTDDCTYLTSLLKEISESSLPY), 176–210 (RLIVMNRIIFAFAETRQIDKVLMILKEMKEWECKP), 211–241 (DVITYNSVLDILGRAGLVNEILGVLSTMKED), 247–281 (NIITYNTVLNGMRKACRFDMCLVIYNEMVQCGIEP), 282–316 (DLLSYTAVIDSLGRSGNVKESLRLFDEMKQRQIRP), and 317–347 (SVYVYRALIDCLKKSGDFQSALQLSDELKNT).

Belongs to the PPR family. P subfamily.

This Arabidopsis thaliana (Mouse-ear cress) protein is Pentatricopeptide repeat-containing protein At1g11900.